Here is a 638-residue protein sequence, read N- to C-terminus: Bifunctional protein glk (638 aa).

The segment at M1–P20 is disordered. A glucokinase region spans residues M1–S341. A24–T29 lines the ATP pocket. The HTH rpiR-type domain maps to S342 to T418. A putative HTH-type transcriptional regulator region spans residues S342–D638. Positions I378 to R397 form a DNA-binding region, H-T-H motif. Residues A462–V601 form the SIS domain.

The protein in the N-terminal section; belongs to the bacterial glucokinase family.

It localises to the cytoplasm. The catalysed reaction is D-glucose + ATP = D-glucose 6-phosphate + ADP + H(+). The chain is Bifunctional protein glk (glk) from Paraburkholderia xenovorans (strain LB400).